The sequence spans 126 residues: Aspartate 1-decarboxylase (126 aa).

S25 functions as the Schiff-base intermediate with substrate; via pyruvic acid in the catalytic mechanism. At S25 the chain carries Pyruvic acid (Ser). A substrate-binding site is contributed by T57. Residue Y58 is the Proton donor of the active site. 73–75 (GAA) lines the substrate pocket.

This sequence belongs to the PanD family. Heterooctamer of four alpha and four beta subunits. Requires pyruvate as cofactor. In terms of processing, is synthesized initially as an inactive proenzyme, which is activated by self-cleavage at a specific serine bond to produce a beta-subunit with a hydroxyl group at its C-terminus and an alpha-subunit with a pyruvoyl group at its N-terminus.

It localises to the cytoplasm. It carries out the reaction L-aspartate + H(+) = beta-alanine + CO2. It functions in the pathway cofactor biosynthesis; (R)-pantothenate biosynthesis; beta-alanine from L-aspartate: step 1/1. In terms of biological role, catalyzes the pyruvoyl-dependent decarboxylation of aspartate to produce beta-alanine. The polypeptide is Aspartate 1-decarboxylase (Chromohalobacter salexigens (strain ATCC BAA-138 / DSM 3043 / CIP 106854 / NCIMB 13768 / 1H11)).